Consider the following 473-residue polypeptide: Glutamyl-tRNA reductase (473 aa).

Substrate contacts are provided by residues 49–52 (TCNR), serine 109, 114–116 (EHQ), and glutamine 120. Cysteine 50 serves as the catalytic Nucleophile. Residue 189-194 (GAGAMA) participates in NADP(+) binding. Residues 422 to 473 (VAISAPQPSTDSPARAAYQPTDEAATDAEPRRDDAEPPSAAAAQDAGRESRP) form a disordered region.

Belongs to the glutamyl-tRNA reductase family. As to quaternary structure, homodimer.

The enzyme catalyses (S)-4-amino-5-oxopentanoate + tRNA(Glu) + NADP(+) = L-glutamyl-tRNA(Glu) + NADPH + H(+). The protein operates within porphyrin-containing compound metabolism; protoporphyrin-IX biosynthesis; 5-aminolevulinate from L-glutamyl-tRNA(Glu): step 1/2. Catalyzes the NADPH-dependent reduction of glutamyl-tRNA(Glu) to glutamate 1-semialdehyde (GSA). This chain is Glutamyl-tRNA reductase, found in Acidothermus cellulolyticus (strain ATCC 43068 / DSM 8971 / 11B).